A 210-amino-acid chain; its full sequence is Protein GET1 (210 aa).

The Lumenal segment spans residues 1–4 (MPSL). A helical membrane pass occupies residues 5 to 24 (LIIVLIIHVVTYLINTIGAN). At 25–110 (TIDSLLWLLY…SFDLAVKSIR (86 aa)) the chain is on the cytoplasmic side. Positions 39–95 (NQTSQTANEQRRLKREVMQLKREMNATSSQDEFAKWAKLRRRHDKTMEEYEAKNKAL) form a coiled coil. A helical membrane pass occupies residues 111 to 131 (FFSTTGLKLFLQFWCSKTPIF). The Lumenal portion of the chain corresponds to 132–155 (ELPRGWIPWQVEWVLSFPRAPLGT). The helical transmembrane segment at 156–172 (VSIQIWGGVCATVVSLA) threads the bilayer. At 173-210 (GDAIGVVNVYLTSKAPKQKEPATSGENSARPMAIKKEL) the chain is on the cytoplasmic side. A disordered region spans residues 189 to 210 (KQKEPATSGENSARPMAIKKEL).

It belongs to the WRB/GET1 family. In terms of assembly, interacts with GET3.

It localises to the endoplasmic reticulum membrane. In terms of biological role, required for the post-translational delivery of tail-anchored (TA) proteins to the endoplasmic reticulum. Acts as a membrane receptor for soluble GET3, which recognizes and selectively binds the transmembrane domain of TA proteins in the cytosol. This is Protein GET1 from Coccidioides immitis (strain RS) (Valley fever fungus).